We begin with the raw amino-acid sequence, 59 residues long: Large ribosomal subunit protein bL32B (59 aa).

This sequence belongs to the bacterial ribosomal protein bL32 family.

The chain is Large ribosomal subunit protein bL32B (rpmF2) from Enterococcus faecalis (strain ATCC 700802 / V583).